The primary structure comprises 268 residues: MSRFETQFATLNAKNEGAFVPFVTLCDPTFDCSFEIICTLVDNGADALELGFPFSDPLLDGPVIQAANNRALTAGHSSEDSFKLLEKVRSKYPEIPISLLLCANLIFAKGLDAFYQRCAEVGVDAVLVADIPLLAKEDYVQAAKKHGIQPVFICPPNADEKTIQGVAKNSEGYTYLVSRAGVTSAENQAHAANLDTLVEQLKAHYAPPILQGFGIAQPAQVKEALALGAAGAISGSATVKIIERNLDNHEQCLAELAEFVQTMKAATK.

Catalysis depends on proton acceptor residues Glu-49 and Asp-60.

This sequence belongs to the TrpA family. As to quaternary structure, tetramer of two alpha and two beta chains.

The enzyme catalyses (1S,2R)-1-C-(indol-3-yl)glycerol 3-phosphate + L-serine = D-glyceraldehyde 3-phosphate + L-tryptophan + H2O. It participates in amino-acid biosynthesis; L-tryptophan biosynthesis; L-tryptophan from chorismate: step 5/5. The alpha subunit is responsible for the aldol cleavage of indoleglycerol phosphate to indole and glyceraldehyde 3-phosphate. The polypeptide is Tryptophan synthase alpha chain (Haemophilus influenzae (strain 86-028NP)).